The sequence spans 123 residues: WAP four-disulfide core domain protein 5 (123 aa).

Positions 1–24 are cleaved as a signal peptide; that stretch reads MRIQSLLLLGALLAVGSQLPAVFG. WAP domains are found at residues 27–73 and 74–121; these read KGEK…CVPR and VSVK…RDPA. 8 disulfide bridges follow: Cys34–Cys62, Cys41–Cys66, Cys49–Cys61, Cys55–Cys70, Cys81–Cys109, Cys88–Cys113, Cys96–Cys108, and Cys102–Cys117.

The protein resides in the secreted. Putative acid-stable proteinase inhibitor. This chain is WAP four-disulfide core domain protein 5 (WFDC5), found in Papio anubis (Olive baboon).